Here is a 724-residue protein sequence, read N- to C-terminus: Hyaluronan mediated motility receptor (724 aa).

Disordered regions lie at residues 1 to 22 (MSFPKAPLKRFNDPSGCAPSPG) and 40 to 81 (KSQR…QKND). Ser20 is subject to Phosphoserine. Composition is skewed to basic and acidic residues over residues 46-60 (QQKESKQNLNVDKDT) and 70-81 (KSSESKESQKND). Residues Asn133, Asn477, Asn567, and Asn588 are each glycosylated (N-linked (GlcNAc...) asparagine). The interval 365-546 (EEMVKEKNLF…ITDLQNQLKQ (182 aa)) is required for interaction with FAM83D. Hyaluronic acid-binding regions lie at residues 635–645 (KQKIKHVVKLK) and 657–666 (KLRCQLAKKK). At Thr703 the chain carries Phosphothreonine.

As to quaternary structure, interacts with ANKRD26. Interacts with DYNLL1. Interacts with FAM83D/CHICA. Expressed in testis. Expressed in the breast.

The protein resides in the cell surface. It localises to the cytoplasm. The protein localises to the cytoskeleton. Its subcellular location is the spindle. Functionally, receptor for hyaluronic acid (HA). Involved in cell motility. When hyaluronan binds to HMMR, the phosphorylation of a number of proteins, including PTK2/FAK1 occurs. May also be involved in cellular transformation and metastasis formation, and in regulating extracellular-regulated kinase (ERK) activity. May act as a regulator of adipogenisis. This is Hyaluronan mediated motility receptor (HMMR) from Homo sapiens (Human).